The chain runs to 183 residues: Adenylate kinase (183 aa).

Residue 12-17 (GAGKGT) participates in ATP binding. An NMP region spans residues 32–61 (STGDLLRSEVAAGTALGQEAEAVMNRGELV). Residues Thr-33, Arg-38, 59 to 61 (ELV), 86 to 89 (GFPR), and Gln-93 each bind AMP. Residues 127–133 (ARGRDDD) are LID. Arg-128 provides a ligand contact to ATP. Residues Arg-130 and Arg-141 each coordinate AMP. Position 169 (Gly-169) interacts with ATP.

Belongs to the adenylate kinase family. Monomer.

Its subcellular location is the cytoplasm. It carries out the reaction AMP + ATP = 2 ADP. The protein operates within purine metabolism; AMP biosynthesis via salvage pathway; AMP from ADP: step 1/1. Functionally, catalyzes the reversible transfer of the terminal phosphate group between ATP and AMP. Plays an important role in cellular energy homeostasis and in adenine nucleotide metabolism. This chain is Adenylate kinase, found in Parasynechococcus marenigrum (strain WH8102).